We begin with the raw amino-acid sequence, 475 residues long: Splicing factor U2AF 65 kDa subunit (475 aa).

The interval 1 to 90 is disordered; sequence MSDFDEFERQ…RHEKKKKVRK (90 aa). Serine 2 is subject to N-acetylserine. Serine 2 bears the Phosphoserine mark. Residues 2-93 are required for interaction with PRPF19; it reads SDFDEFERQL…KKKKVRKYWD (92 aa). Residues 7-22 are compositionally biased toward basic and acidic residues; the sequence is FERQLNENKQERDKEN. Lysine 15 carries the 5-hydroxylysine; by JMJD6; alternate modification. Lysine 15 is covalently cross-linked (Glycyl lysine isopeptide (Lys-Gly) (interchain with G-Cter in SUMO2); alternate). Positions 17–47 are necessary and sufficient to stimulate pre-mRNAs 3'-end cleavage in a CFIm complex-dependent manner; that stretch reads ERDKENRHRKRSHSRSRSRDRKRRSRSRDRR. Over residues 23-46 the composition is skewed to basic residues; sequence RHRKRSHSRSRSRDRKRRSRSRDR. Basic and acidic residues predominate over residues 47–56; sequence RNRDQRSASR. A Glycyl lysine isopeptide (Lys-Gly) (interchain with G-Cter in SUMO2); alternate cross-link involves residue lysine 70. Residue lysine 70 is modified to N6-acetyllysine; alternate. Position 79 is a phosphoserine (serine 79). The span at 79–89 shows a compositional bias: basic residues; it reads SPRHEKKKKVR. RRM domains follow at residues 149–231, 259–337, and 385–466; these read RRLY…RPHD, HKLF…RASV, and LPEE…YCDP. Lysine 276 bears the 5-hydroxylysine; by JMJD6 mark. A Phosphoserine modification is found at serine 294.

It belongs to the splicing factor SR family. In terms of assembly, interacts with U2AF1L4. Heterodimer with U2AF1. Binds unphosphorylated SF1. Interacts with SCAF11 and SNW1. Interacts with ZRSR2/U2AF1-RS2. Interacts with RBM17. Interacts with PRPF19; the interaction is direct. Interacts with POLR2A (via the C-terminal domain); Interacts with PRPF19; the interaction is direct. Interacts with POLR2A (via the C-terminal domain); recruits PRPF19 and the Prp19 complex to the pre-mRNA. Interacts with KHDC4 (Isoform 2). Interacts with ZRSR2. Interacts with the SF3B complex composed of SF3B1, SF3B2, SF3B3, SF3B4, SF3B5, SF3B6 and PHF5A. Interacts (via N-terminus) with CPSF7 (via C-terminus); this interaction stimulates pre-mRNA 3'-end processing by promoting the recruitment of the CFIm complex to cleavage and polyadenylation signals. Interacts with ARGLU1; interaction may be involved in ARGLU1-mediated modulation of alternative splicing. Post-translationally, lysyl-hydroxylation at Lys-15 and Lys-276 affects the mRNA splicing activity of the protein, leading to regulate some, but not all, alternative splicing events.

It is found in the nucleus. Plays a role in pre-mRNA splicing and 3'-end processing. By recruiting PRPF19 and the PRP19C/Prp19 complex/NTC/Nineteen complex to the RNA polymerase II C-terminal domain (CTD), and thereby pre-mRNA, may couple transcription to splicing. Required for the export of mRNA out of the nucleus, even if the mRNA is encoded by an intron-less gene. Positively regulates pre-mRNA 3'-end processing by recruiting the CFIm complex to cleavage and polyadenylation signals. This chain is Splicing factor U2AF 65 kDa subunit (U2af2), found in Mus musculus (Mouse).